Reading from the N-terminus, the 303-residue chain is Probable porphobilinogen deaminase (303 aa).

Cys240 is subject to S-(dipyrrolylmethanemethyl)cysteine.

The protein belongs to the HMBS family. Dipyrromethane is required as a cofactor.

It carries out the reaction 4 porphobilinogen + H2O = hydroxymethylbilane + 4 NH4(+). Its pathway is porphyrin-containing compound metabolism; protoporphyrin-IX biosynthesis; coproporphyrinogen-III from 5-aminolevulinate: step 2/4. Its function is as follows. Tetrapolymerization of the monopyrrole PBG into the hydroxymethylbilane pre-uroporphyrinogen in several discrete steps. In Hyperthermus butylicus (strain DSM 5456 / JCM 9403 / PLM1-5), this protein is Probable porphobilinogen deaminase.